A 141-amino-acid polypeptide reads, in one-letter code: Large ribosomal subunit protein uL11 (141 aa).

The protein belongs to the universal ribosomal protein uL11 family. Part of the ribosomal stalk of the 50S ribosomal subunit. Interacts with L10 and the large rRNA to form the base of the stalk. L10 forms an elongated spine to which L12 dimers bind in a sequential fashion forming a multimeric L10(L12)X complex. Post-translationally, one or more lysine residues are methylated.

Functionally, forms part of the ribosomal stalk which helps the ribosome interact with GTP-bound translation factors. The protein is Large ribosomal subunit protein uL11 of Picosynechococcus sp. (strain ATCC 27264 / PCC 7002 / PR-6) (Agmenellum quadruplicatum).